We begin with the raw amino-acid sequence, 229 residues long: ATP synthase subunit a (229 aa).

6 consecutive transmembrane segments (helical) span residues 25–45 (ADAI…SMLA), 82–102 (FFPL…IGLV), 104–124 (GFFP…IVFV), 142–162 (FLGP…IGHF), 181–201 (LVLM…MMLM), and 202–222 (GVLV…IYIQ).

Belongs to the ATPase A chain family. F-type ATPases have 2 components, CF(1) - the catalytic core - and CF(0) - the membrane proton channel. CF(1) has five subunits: alpha(3), beta(3), gamma(1), delta(1), epsilon(1). CF(0) has three main subunits: a(1), b(2) and c(9-12). The alpha and beta chains form an alternating ring which encloses part of the gamma chain. CF(1) is attached to CF(0) by a central stalk formed by the gamma and epsilon chains, while a peripheral stalk is formed by the delta and b chains.

The protein resides in the cell inner membrane. Functionally, key component of the proton channel; it plays a direct role in the translocation of protons across the membrane. In Geotalea uraniireducens (strain Rf4) (Geobacter uraniireducens), this protein is ATP synthase subunit a.